The chain runs to 458 residues: Bifunctional protein GlmU (458 aa).

Positions 1–224 are pyrophosphorylase; it reads MTVIALAAGK…PKVAVGVNNQ (224 aa). Residues 6-9, K20, Q71, and 76-77 each bind UDP-N-acetyl-alpha-D-glucosamine; these read LAAG and GT. A Mg(2+)-binding site is contributed by D99. The UDP-N-acetyl-alpha-D-glucosamine site is built by G136, E150, N165, and N222. Position 222 (N222) interacts with Mg(2+). The tract at residues 225–245 is linker; sequence LELARATRLLFKRKALRLMED. An N-acetyltransferase region spans residues 246 to 458; it reads GVLMIDPRTV…TAETEEKEQV (213 aa). Residues R328 and K346 each coordinate UDP-N-acetyl-alpha-D-glucosamine. H358 functions as the Proton acceptor in the catalytic mechanism. Positions 361 and 372 each coordinate UDP-N-acetyl-alpha-D-glucosamine. Acetyl-CoA-binding positions include 381–382, S401, S419, and R436; that span reads NY.

This sequence in the N-terminal section; belongs to the N-acetylglucosamine-1-phosphate uridyltransferase family. The protein in the C-terminal section; belongs to the transferase hexapeptide repeat family. Homotrimer. Requires Mg(2+) as cofactor.

Its subcellular location is the cytoplasm. The enzyme catalyses alpha-D-glucosamine 1-phosphate + acetyl-CoA = N-acetyl-alpha-D-glucosamine 1-phosphate + CoA + H(+). It catalyses the reaction N-acetyl-alpha-D-glucosamine 1-phosphate + UTP + H(+) = UDP-N-acetyl-alpha-D-glucosamine + diphosphate. Its pathway is nucleotide-sugar biosynthesis; UDP-N-acetyl-alpha-D-glucosamine biosynthesis; N-acetyl-alpha-D-glucosamine 1-phosphate from alpha-D-glucosamine 6-phosphate (route II): step 2/2. It participates in nucleotide-sugar biosynthesis; UDP-N-acetyl-alpha-D-glucosamine biosynthesis; UDP-N-acetyl-alpha-D-glucosamine from N-acetyl-alpha-D-glucosamine 1-phosphate: step 1/1. It functions in the pathway bacterial outer membrane biogenesis; LPS lipid A biosynthesis. Its function is as follows. Catalyzes the last two sequential reactions in the de novo biosynthetic pathway for UDP-N-acetylglucosamine (UDP-GlcNAc). The C-terminal domain catalyzes the transfer of acetyl group from acetyl coenzyme A to glucosamine-1-phosphate (GlcN-1-P) to produce N-acetylglucosamine-1-phosphate (GlcNAc-1-P), which is converted into UDP-GlcNAc by the transfer of uridine 5-monophosphate (from uridine 5-triphosphate), a reaction catalyzed by the N-terminal domain. The sequence is that of Bifunctional protein GlmU from Bdellovibrio bacteriovorus (strain ATCC 15356 / DSM 50701 / NCIMB 9529 / HD100).